The primary structure comprises 483 residues: Glutamyl-tRNA(Gln) amidotransferase subunit A (483 aa).

Active-site charge relay system residues include Lys-76 and Ser-151. The active-site Acyl-ester intermediate is the Ser-175.

This sequence belongs to the amidase family. GatA subfamily. As to quaternary structure, heterotrimer of A, B and C subunits.

The catalysed reaction is L-glutamyl-tRNA(Gln) + L-glutamine + ATP + H2O = L-glutaminyl-tRNA(Gln) + L-glutamate + ADP + phosphate + H(+). In terms of biological role, allows the formation of correctly charged Gln-tRNA(Gln) through the transamidation of misacylated Glu-tRNA(Gln) in organisms which lack glutaminyl-tRNA synthetase. The reaction takes place in the presence of glutamine and ATP through an activated gamma-phospho-Glu-tRNA(Gln). In Pseudomonas savastanoi pv. phaseolicola (strain 1448A / Race 6) (Pseudomonas syringae pv. phaseolicola (strain 1448A / Race 6)), this protein is Glutamyl-tRNA(Gln) amidotransferase subunit A.